The primary structure comprises 359 residues: Chorismate synthase (359 aa).

NADP(+) is bound at residue arginine 47. FMN is bound by residues 123–125, glycine 283, 298–302, and arginine 326; these read RSS and KPTSS.

It belongs to the chorismate synthase family. As to quaternary structure, homotetramer. FMNH2 is required as a cofactor.

It catalyses the reaction 5-O-(1-carboxyvinyl)-3-phosphoshikimate = chorismate + phosphate. The protein operates within metabolic intermediate biosynthesis; chorismate biosynthesis; chorismate from D-erythrose 4-phosphate and phosphoenolpyruvate: step 7/7. Its function is as follows. Catalyzes the anti-1,4-elimination of the C-3 phosphate and the C-6 proR hydrogen from 5-enolpyruvylshikimate-3-phosphate (EPSP) to yield chorismate, which is the branch point compound that serves as the starting substrate for the three terminal pathways of aromatic amino acid biosynthesis. This reaction introduces a second double bond into the aromatic ring system. The protein is Chorismate synthase of Chlamydia caviae (strain ATCC VR-813 / DSM 19441 / 03DC25 / GPIC) (Chlamydophila caviae).